Reading from the N-terminus, the 155-residue chain is Peptide deformylase (155 aa).

Cysteine 88 and histidine 130 together coordinate Fe cation. The active site involves glutamate 131. Histidine 134 lines the Fe cation pocket.

This sequence belongs to the polypeptide deformylase family. The cofactor is Fe(2+).

The enzyme catalyses N-terminal N-formyl-L-methionyl-[peptide] + H2O = N-terminal L-methionyl-[peptide] + formate. Functionally, removes the formyl group from the N-terminal Met of newly synthesized proteins. Requires at least a dipeptide for an efficient rate of reaction. N-terminal L-methionine is a prerequisite for activity but the enzyme has broad specificity at other positions. The chain is Peptide deformylase from Pelotomaculum thermopropionicum (strain DSM 13744 / JCM 10971 / SI).